The chain runs to 463 residues: Toxin CaTX-A (463 aa).

The signal sequence occupies residues 1–18; that stretch reads MSRGYSLHLVLFLVLSTA.

This sequence belongs to the jellyfish toxin family. Type II subfamily. Oligomer. Contains disulfide bonds. It is suggested that CaTX-B is synthesized in the tentacle, is modified (become CaTX-A) and then migrates to the nematocyst.

It is found in the secreted. The protein resides in the nematocyst. The protein localises to the target cell membrane. In terms of biological role, has potent hemolytic activity. Is lethal to crayfish. Causes cutaneous inflammation in humans. May act as a pore-forming toxin, disrupting normal transmembrane ion concentration gradients in susceptible cells. The chain is Toxin CaTX-A from Carybdea alata (Hawaiian box jellyfish).